Here is a 126-residue protein sequence, read N- to C-terminus: Large ribosomal subunit protein bL21 (126 aa).

Residues 105–126 form a disordered region; that stretch reads KKPSVGPRAKRTKAAPAAEAAE.

Contacts protein L20. Part of the 50S ribosomal subunit.

In terms of biological role, this protein binds to 23S rRNA in the presence of protein L20. This chain is Large ribosomal subunit protein bL21, found in Rhodopseudomonas palustris (strain ATCC BAA-98 / CGA009).